The sequence spans 646 residues: Acetyl-coenzyme A synthetase (646 aa).

CoA contacts are provided by residues 190–193 and threonine 309; that span reads RAGK. ATP contacts are provided by residues 385-387, 409-414, aspartate 498, and arginine 513; these read GEP and DTWWQT. Serine 521 contacts CoA. ATP is bound at residue arginine 524. The Mg(2+) site is built by valine 535, histidine 537, and valine 540. Arginine 582 lines the CoA pocket. Lysine 607 is subject to N6-acetyllysine.

The protein belongs to the ATP-dependent AMP-binding enzyme family. It depends on Mg(2+) as a cofactor. Post-translationally, acetylated. Deacetylation by the SIR2-homolog deacetylase activates the enzyme.

It carries out the reaction acetate + ATP + CoA = acetyl-CoA + AMP + diphosphate. In terms of biological role, catalyzes the conversion of acetate into acetyl-CoA (AcCoA), an essential intermediate at the junction of anabolic and catabolic pathways. AcsA undergoes a two-step reaction. In the first half reaction, AcsA combines acetate with ATP to form acetyl-adenylate (AcAMP) intermediate. In the second half reaction, it can then transfer the acetyl group from AcAMP to the sulfhydryl group of CoA, forming the product AcCoA. This is Acetyl-coenzyme A synthetase from Pseudoalteromonas atlantica (strain T6c / ATCC BAA-1087).